We begin with the raw amino-acid sequence, 567 residues long: Urease subunit alpha (567 aa).

Residues 129–567 (GGIDAHIHFI…LPLAQLYCLF (439 aa)) form the Urease domain. Ni(2+) contacts are provided by His-134, His-136, and Lys-217. Position 217 is an N6-carboxylysine (Lys-217). His-219 contacts substrate. 2 residues coordinate Ni(2+): His-246 and His-272. The active-site Proton donor is the His-320. A Ni(2+)-binding site is contributed by Asp-360.

Belongs to the metallo-dependent hydrolases superfamily. Urease alpha subunit family. As to quaternary structure, heterotrimer of UreA (gamma), UreB (beta) and UreC (alpha) subunits. Three heterotrimers associate to form the active enzyme. The cofactor is Ni cation. In terms of processing, carboxylation allows a single lysine to coordinate two nickel ions.

It is found in the cytoplasm. The enzyme catalyses urea + 2 H2O + H(+) = hydrogencarbonate + 2 NH4(+). The protein operates within nitrogen metabolism; urea degradation; CO(2) and NH(3) from urea (urease route): step 1/1. The protein is Urease subunit alpha of Alteromonas mediterranea (strain DSM 17117 / CIP 110805 / LMG 28347 / Deep ecotype).